Reading from the N-terminus, the 538-residue chain is Chaperonin GroEL (538 aa).

ATP contacts are provided by residues 29-32, 86-90, Gly-413, 476-478, and Asp-492; these read TIGP, DGTTT, and NAA.

Belongs to the chaperonin (HSP60) family. As to quaternary structure, forms a cylinder of 14 subunits composed of two heptameric rings stacked back-to-back. Interacts with the co-chaperonin GroES.

The protein localises to the cytoplasm. The catalysed reaction is ATP + H2O + a folded polypeptide = ADP + phosphate + an unfolded polypeptide.. Functionally, together with its co-chaperonin GroES, plays an essential role in assisting protein folding. The GroEL-GroES system forms a nano-cage that allows encapsulation of the non-native substrate proteins and provides a physical environment optimized to promote and accelerate protein folding. The sequence is that of Chaperonin GroEL from Staphylococcus aureus (strain MRSA252).